Reading from the N-terminus, the 370-residue chain is NADH-quinone oxidoreductase subunit D 2 (370 aa).

Belongs to the complex I 49 kDa subunit family. NDH-1 is composed of 14 different subunits. Subunits NuoB, C, D, E, F, and G constitute the peripheral sector of the complex.

The protein resides in the cell membrane. The catalysed reaction is a quinone + NADH + 5 H(+)(in) = a quinol + NAD(+) + 4 H(+)(out). Its function is as follows. NDH-1 shuttles electrons from NADH, via FMN and iron-sulfur (Fe-S) centers, to quinones in the respiratory chain. The immediate electron acceptor for the enzyme in this species is believed to be ubiquinone. Couples the redox reaction to proton translocation (for every two electrons transferred, four hydrogen ions are translocated across the cytoplasmic membrane), and thus conserves the redox energy in a proton gradient. The protein is NADH-quinone oxidoreductase subunit D 2 of Herpetosiphon aurantiacus (strain ATCC 23779 / DSM 785 / 114-95).